Here is a 149-residue protein sequence, read N- to C-terminus: Peptide deformylase (149 aa).

Residues cysteine 92 and histidine 134 each contribute to the Fe cation site. Residue glutamate 135 is part of the active site. Histidine 138 provides a ligand contact to Fe cation.

It belongs to the polypeptide deformylase family. The cofactor is Fe(2+).

The catalysed reaction is N-terminal N-formyl-L-methionyl-[peptide] + H2O = N-terminal L-methionyl-[peptide] + formate. Functionally, removes the formyl group from the N-terminal Met of newly synthesized proteins. Requires at least a dipeptide for an efficient rate of reaction. N-terminal L-methionine is a prerequisite for activity but the enzyme has broad specificity at other positions. The polypeptide is Peptide deformylase (Buchnera aphidicola subsp. Cinara cedri (strain Cc)).